The sequence spans 377 residues: Probable aspartic-type endopeptidase CTSD (377 aa).

The Peptidase A1 domain maps to 1–292 (SLIDTGASRT…DFDKNRVGLA (292 aa)). Asp4 is an active-site residue. Asn58 is a glycosylation site (N-linked (GlcNAc...) asparagine). Asp186 is a catalytic residue. Residues 296–351 (YGETKDPPSSSHPPPAPTSNKASGGSPGLPEQSGTSSATTSTTGEPSSGSTASPSA) are disordered. Over residues 328-351 (SGTSSATTSTTGEPSSGSTASPSA) the composition is skewed to low complexity. A lipid anchor (GPI-anchor amidated serine) is attached at Ser350. Positions 351-377 (AASSVSMSAWLSLAVFLSTASSLILWD) are cleaved as a propeptide — removed in mature form.

It belongs to the peptidase A1 family.

It is found in the cell membrane. In terms of biological role, secreted aspartic-type endopeptidase which is secreted and contributes to virulence. The protein is Probable aspartic-type endopeptidase CTSD (CTSD) of Arthroderma otae (strain ATCC MYA-4605 / CBS 113480) (Microsporum canis).